Consider the following 147-residue polypeptide: Large ribosomal subunit protein uL13 (147 aa).

Belongs to the universal ribosomal protein uL13 family. In terms of assembly, part of the 50S ribosomal subunit.

In terms of biological role, this protein is one of the early assembly proteins of the 50S ribosomal subunit, although it is not seen to bind rRNA by itself. It is important during the early stages of 50S assembly. The protein is Large ribosomal subunit protein uL13 of Pseudarthrobacter chlorophenolicus (strain ATCC 700700 / DSM 12829 / CIP 107037 / JCM 12360 / KCTC 9906 / NCIMB 13794 / A6) (Arthrobacter chlorophenolicus).